Here is a 299-residue protein sequence, read N- to C-terminus: tRNA pseudouridine synthase B (299 aa).

Aspartate 38 serves as the catalytic Nucleophile.

The protein belongs to the pseudouridine synthase TruB family. Type 1 subfamily.

The catalysed reaction is uridine(55) in tRNA = pseudouridine(55) in tRNA. Its function is as follows. Responsible for synthesis of pseudouridine from uracil-55 in the psi GC loop of transfer RNAs. The polypeptide is tRNA pseudouridine synthase B (Pediococcus pentosaceus (strain ATCC 25745 / CCUG 21536 / LMG 10740 / 183-1w)).